A 276-amino-acid chain; its full sequence is Formamidopyrimidine-DNA glycosylase (276 aa).

The active-site Schiff-base intermediate with DNA is P2. E3 (proton donor) is an active-site residue. K58 (proton donor; for beta-elimination activity) is an active-site residue. Residues H94, R112, and R157 each coordinate DNA. The FPG-type zinc finger occupies 242-276; the sequence is FVYDRAGLPCRVCGTPIKQIVQGQRSTYFCPTCQR. The Proton donor; for delta-elimination activity role is filled by R266.

It belongs to the FPG family. Monomer. Zn(2+) serves as cofactor.

It carries out the reaction Hydrolysis of DNA containing ring-opened 7-methylguanine residues, releasing 2,6-diamino-4-hydroxy-5-(N-methyl)formamidopyrimidine.. It catalyses the reaction 2'-deoxyribonucleotide-(2'-deoxyribose 5'-phosphate)-2'-deoxyribonucleotide-DNA = a 3'-end 2'-deoxyribonucleotide-(2,3-dehydro-2,3-deoxyribose 5'-phosphate)-DNA + a 5'-end 5'-phospho-2'-deoxyribonucleoside-DNA + H(+). Involved in base excision repair of DNA damaged by oxidation or by mutagenic agents. Acts as a DNA glycosylase that recognizes and removes damaged bases. Has a preference for oxidized purines, such as 7,8-dihydro-8-oxoguanine (8-oxoG). Has AP (apurinic/apyrimidinic) lyase activity and introduces nicks in the DNA strand. Cleaves the DNA backbone by beta-delta elimination to generate a single-strand break at the site of the removed base with both 3'- and 5'-phosphates. The polypeptide is Formamidopyrimidine-DNA glycosylase (Paraburkholderia xenovorans (strain LB400)).